Here is a 391-residue protein sequence, read N- to C-terminus: Ferrochelatase (391 aa).

Residues His-196 and Glu-281 each coordinate Fe cation.

The protein belongs to the ferrochelatase family.

The protein resides in the cytoplasm. The enzyme catalyses heme b + 2 H(+) = protoporphyrin IX + Fe(2+). The protein operates within porphyrin-containing compound metabolism; protoheme biosynthesis; protoheme from protoporphyrin-IX: step 1/1. Its function is as follows. Catalyzes the ferrous insertion into protoporphyrin IX. This chain is Ferrochelatase, found in Synechococcus sp. (strain CC9605).